The following is a 336-amino-acid chain: N-acetyl-gamma-glutamyl-phosphate reductase (336 aa).

Residue Cys143 is part of the active site.

This sequence belongs to the NAGSA dehydrogenase family. Type 1 subfamily.

It is found in the cytoplasm. It carries out the reaction N-acetyl-L-glutamate 5-semialdehyde + phosphate + NADP(+) = N-acetyl-L-glutamyl 5-phosphate + NADPH + H(+). The protein operates within amino-acid biosynthesis; L-arginine biosynthesis; N(2)-acetyl-L-ornithine from L-glutamate: step 3/4. Functionally, catalyzes the NADPH-dependent reduction of N-acetyl-5-glutamyl phosphate to yield N-acetyl-L-glutamate 5-semialdehyde. The chain is N-acetyl-gamma-glutamyl-phosphate reductase from Dictyoglomus thermophilum (strain ATCC 35947 / DSM 3960 / H-6-12).